Consider the following 236-residue polypeptide: tRNA1(Val) (adenine(37)-N6)-methyltransferase (236 aa).

The protein belongs to the methyltransferase superfamily. tRNA (adenine-N(6)-)-methyltransferase family.

It is found in the cytoplasm. The catalysed reaction is adenosine(37) in tRNA1(Val) + S-adenosyl-L-methionine = N(6)-methyladenosine(37) in tRNA1(Val) + S-adenosyl-L-homocysteine + H(+). In terms of biological role, specifically methylates the adenine in position 37 of tRNA(1)(Val) (anticodon cmo5UAC). This Aeromonas salmonicida (strain A449) protein is tRNA1(Val) (adenine(37)-N6)-methyltransferase.